The sequence spans 326 residues: Ig gamma-1 chain C region (326 aa).

The segment at 1 to 97 (AETTAPSVYP…ASSTKVDKKI (97 aa)) is CH1. An intrachain disulfide couples Cys-27 to Cys-82. Residues 98 to 112 (VPRNCGGDCKPCICT) form a hinge region. The CH2 stretch occupies residues 113 to 219 (GSEVSSVFIF…PIEKTISKPE (107 aa)). Cystine bridges form between Cys-140-Cys-200 and Cys-246-Cys-304. N-linked (GlcNAc...) asparagine glycosylation occurs at Asn-176. Residues 220 to 326 (GRTQVPHVYT…EKSLSHSPGK (107 aa)) form a CH3 region.

In Rattus norvegicus (Rat), this protein is Ig gamma-1 chain C region.